A 315-amino-acid polypeptide reads, in one-letter code: Annexin Gh1 (315 aa).

Annexin repeat units follow at residues 10 to 81, 82 to 153, 165 to 236, and 240 to 311; these read PSVS…LWAL, DPAE…PLVS, TLAK…STVK, and YPEK…VLAG. Residues Phe23, Gly25, Gly27, and Glu67 each coordinate Ca(2+). The Ca(2+) site is built by Ile253, Arg255, Gly257, Val295, Asp297, Thr298, and Glu303.

The protein belongs to the annexin family. Monomer. Trimer. Oligomerization is calcium-independent. Disassembly of the oligomers seems to be required for calcium-binding.

It localises to the membrane. Functionally, binds to phospholipid vesicles in a calcium-dependent manner in vitro. Prefers phosphatidyl-serine containing membranes. May have a role in the membrane cytoskeleton scaffolding or exocytotic processes. May be involved in oxidative stress response. The sequence is that of Annexin Gh1 from Gossypium hirsutum (Upland cotton).